Here is a 696-residue protein sequence, read N- to C-terminus: Macrolide export ATP-binding/permease protein MacB (696 aa).

The 239-residue stretch at 6-244 (IELKNIERYH…KPQNKRTFID (239 aa)) folds into the ABC transporter domain. Residue 42–49 (GASGSGKS) participates in ATP binding. Residues 254–287 (HNTEKLNRPNEKNNIDNDNKENNNGYNRNDNSFL) are disordered. The segment covering 255-274 (NTEKLNRPNEKNNIDNDNKE) has biased composition (basic and acidic residues). A compositionally biased stretch (low complexity) spans 275–284 (NNNGYNRNDN). 4 helical membrane-spanning segments follow: residues 324-344 (FLTMLGIIIGIIAVVFVIALG), 576-596 (IAFISLIVGGIGIMNIMLVSV), 626-646 (MVSLIGGCIGVGCALLFGGLF), and 659-679 (LSSFLIAFLCSSMIGIVFGYF).

The protein belongs to the ABC transporter superfamily. Macrolide exporter (TC 3.A.1.122) family. In terms of assembly, homodimer. Part of the tripartite efflux system MacAB-TolC, which is composed of an inner membrane transporter, MacB, a periplasmic membrane fusion protein, MacA, and an outer membrane component, TolC. The complex forms a large protein conduit and can translocate molecules across both the inner and outer membranes. Interacts with MacA.

The protein localises to the cell inner membrane. Its function is as follows. Part of the tripartite efflux system MacAB-TolC. MacB is a non-canonical ABC transporter that contains transmembrane domains (TMD), which form a pore in the inner membrane, and an ATP-binding domain (NBD), which is responsible for energy generation. Confers resistance against macrolides. This chain is Macrolide export ATP-binding/permease protein MacB, found in Haemophilus ducreyi (strain 35000HP / ATCC 700724).